Reading from the N-terminus, the 454-residue chain is Pup--protein ligase (454 aa).

Residue E9 coordinates Mg(2+). R53 is an ATP binding site. Y55 is a Mg(2+) binding site. D57 functions as the Proton acceptor in the catalytic mechanism. E63 serves as a coordination point for Mg(2+). Residues T66 and W420 each coordinate ATP.

This sequence belongs to the Pup ligase/Pup deamidase family. Pup-conjugating enzyme subfamily.

The enzyme catalyses ATP + [prokaryotic ubiquitin-like protein]-L-glutamate + [protein]-L-lysine = ADP + phosphate + N(6)-([prokaryotic ubiquitin-like protein]-gamma-L-glutamyl)-[protein]-L-lysine.. The protein operates within protein degradation; proteasomal Pup-dependent pathway. Its pathway is protein modification; protein pupylation. In terms of biological role, catalyzes the covalent attachment of the prokaryotic ubiquitin-like protein modifier Pup to the proteasomal substrate proteins, thereby targeting them for proteasomal degradation. This tagging system is termed pupylation. The ligation reaction involves the side-chain carboxylate of the C-terminal glutamate of Pup and the side-chain amino group of a substrate lysine. The protein is Pup--protein ligase of Pseudarthrobacter chlorophenolicus (strain ATCC 700700 / DSM 12829 / CIP 107037 / JCM 12360 / KCTC 9906 / NCIMB 13794 / A6) (Arthrobacter chlorophenolicus).